The primary structure comprises 313 residues: Protoheme IX farnesyltransferase (313 aa).

Transmembrane regions (helical) follow at residues 35–55 (LVIF…HPVL), 56–76 (AFTS…LNMW), 98–118 (VSKP…VVTL), 120–140 (ILVN…YVVI), 153–173 (IVIG…AAAG), 180–200 (MLLF…LALF), 226–246 (ILLY…LGYF), 248–268 (AIYG…TLRV), and 285–305 (FKFS…EVIV).

This sequence belongs to the UbiA prenyltransferase family. Protoheme IX farnesyltransferase subfamily.

It localises to the cell inner membrane. The catalysed reaction is heme b + (2E,6E)-farnesyl diphosphate + H2O = Fe(II)-heme o + diphosphate. The protein operates within porphyrin-containing compound metabolism; heme O biosynthesis; heme O from protoheme: step 1/1. In terms of biological role, converts heme B (protoheme IX) to heme O by substitution of the vinyl group on carbon 2 of heme B porphyrin ring with a hydroxyethyl farnesyl side group. This chain is Protoheme IX farnesyltransferase, found in Rhodopseudomonas palustris (strain BisB18).